Here is a 737-residue protein sequence, read N- to C-terminus: Photosystem I P700 chlorophyll a apoprotein A2 (737 aa).

Helical transmembrane passes span 46-69 (LFST…FHIA), 135-158 (LYQG…LHLQ), 175-199 (LNHH…HVAI), 273-291 (IAHH…GHMY), 333-356 (LHFQ…QHMY), 372-398 (AALY…IFFI), 420-442 (AIIS…LYVH), and 520-538 (FLVH…LILV). Cysteine 562 and cysteine 571 together coordinate [4Fe-4S] cluster. Helical transmembrane passes span 578–599 (AFYL…YWHW) and 646–668 (LAVW…MFLI). Residues histidine 657, methionine 665, and tyrosine 673 each coordinate chlorophyll a. A phylloquinone-binding site is contributed by tryptophan 674. The chain crosses the membrane as a helical span at residues 710-730 (VVGLAHFSVGYVLTYAAFLIA).

It belongs to the PsaA/PsaB family. In terms of assembly, the PsaA/B heterodimer binds the P700 chlorophyll special pair and subsequent electron acceptors. PSI consists of a core antenna complex that captures photons, and an electron transfer chain that converts photonic excitation into a charge separation. The cyanobacterial PSI reaction center is composed of one copy each of PsaA,B,C,D,E,F,I,J,K,L,M and X, and forms trimeric complexes. PSI electron transfer chain: 5 chlorophyll a, 1 chlorophyll a', 2 phylloquinones and 3 4Fe-4S clusters. PSI core antenna: 90 chlorophyll a, 22 carotenoids, 3 phospholipids and 1 galactolipid. P700 is a chlorophyll a/chlorophyll a' dimer, A0 is one or more chlorophyll a, A1 is one or both phylloquinones and FX is a shared 4Fe-4S iron-sulfur center. is required as a cofactor.

The protein localises to the cellular thylakoid membrane. It catalyses the reaction reduced [plastocyanin] + hnu + oxidized [2Fe-2S]-[ferredoxin] = oxidized [plastocyanin] + reduced [2Fe-2S]-[ferredoxin]. Functionally, psaA and PsaB bind P700, the primary electron donor of photosystem I (PSI), as well as the electron acceptors A0, A1 and FX. PSI is a plastocyanin/cytochrome c6-ferredoxin oxidoreductase, converting photonic excitation into a charge separation, which transfers an electron from the donor P700 chlorophyll pair to the spectroscopically characterized acceptors A0, A1, FX, FA and FB in turn. Oxidized P700 is reduced on the lumenal side of the thylakoid membrane by plastocyanin or cytochrome c6. The sequence is that of Photosystem I P700 chlorophyll a apoprotein A2 from Parasynechococcus marenigrum (strain WH8102).